Consider the following 666-residue polypeptide: Probable potassium transport system protein Kup (666 aa).

12 helical membrane passes run 16-36, 58-78, 100-120, 141-161, 165-185, 221-241, 253-273, 292-312, 343-363, 373-393, 399-419, and 424-444; these read GFII…LYTM, ISLI…LIAL, PWLI…GALT, IYQN…VLFG, FGTG…FSFL, IFIL…YSDL, WPFV…WILA, LTVY…QALI, LYIP…VLYF, YGLA…YYLI, PFLA…FFWA, and FMHG…VMFI.

It belongs to the HAK/KUP transporter (TC 2.A.72) family.

Its subcellular location is the cell membrane. The catalysed reaction is K(+)(in) + H(+)(in) = K(+)(out) + H(+)(out). Transport of potassium into the cell. Likely operates as a K(+):H(+) symporter. The sequence is that of Probable potassium transport system protein Kup from Streptococcus pyogenes serotype M18 (strain MGAS8232).